The chain runs to 1939 residues: Myosin-1 (1939 aa).

The 50-residue stretch at 33 to 82 (DAKTSVFVAEPKESFVKGTVQSREGGKVTVKTEAGATLTVKEDQVFPMNP) folds into the Myosin N-terminal SH3-like domain. Phosphothreonine occurs at positions 64 and 69. The Myosin motor domain occupies 86–782 (DKIEDMAMMT…LLGLLEEMRD (697 aa)). K130 carries the N6,N6,N6-trimethyllysine modification. Residue 179 to 186 (GESGAGKT) participates in ATP binding. Y389 carries the phosphotyrosine modification. A Phosphoserine modification is found at S392. T419 is modified (phosphothreonine). Y424 bears the Phosphotyrosine mark. At S625 the chain carries Phosphoserine. The segment at 659 to 681 (LNKLMTNLRSTHPHFVRCIIPNE) is actin-binding. Residue H757 is modified to Pros-methylhistidine. Residues 761–775 (KFGHTKVFFKAGLLG) are actin-binding. Positions 785-814 (LAQLITRTQARCRGFLARVEYQKMVERRES) constitute an IQ domain. Residues 843–1939 (LLKSAETEKE…EVHTKIISEE (1097 aa)) adopt a coiled-coil conformation. Phosphoserine occurs at positions 1092 and 1096. 2 disordered regions span residues 1125–1147 (EIEA…SREL) and 1153–1172 (RLEE…KKRE). The span at 1128 to 1147 (AERASRAKAEKQRSDLSREL) shows a compositional bias: basic and acidic residues. 2 positions are modified to phosphoserine: S1162 and S1237. T1241 bears the Phosphothreonine mark. S1243 carries the phosphoserine modification. T1255 is subject to Phosphothreonine. Position 1261 is a phosphoserine (S1261). 2 positions are modified to phosphothreonine: T1265 and T1286. A phosphoserine mark is found at S1288, S1292, S1303, and S1306. The residue at position 1464 (Y1464) is a Phosphotyrosine. T1467 carries the post-translational modification Phosphothreonine. Position 1474 is a phosphoserine (S1474). Position 1492 is a phosphotyrosine (Y1492). S1495 is subject to Phosphoserine. T1501 is modified (phosphothreonine). S1514 carries the phosphoserine modification. Phosphothreonine is present on T1517. Phosphoserine occurs at positions 1554, 1574, 1600, 1603, 1714, and 1726. A phosphothreonine mark is found at T1730 and T1736. At S1739 the chain carries Phosphoserine.

The protein belongs to the TRAFAC class myosin-kinesin ATPase superfamily. Myosin family. As to quaternary structure, muscle myosin is a hexameric protein that consists of 2 heavy chain subunits (MHC), 2 alkali light chain subunits (MLC) and 2 regulatory light chain subunits (MLC-2). Interacts with SLC26A5.

It localises to the cytoplasm. It is found in the myofibril. Its function is as follows. Required for normal hearing. It plays a role in cochlear amplification of auditory stimuli, likely through the positive regulation of prestin (SLC26A5) activity and outer hair cell (OHC) electromotility. This chain is Myosin-1 (MYH1), found in Canis lupus familiaris (Dog).